The chain runs to 433 residues: DNA polymerase processivity factor (433 aa).

The interval 274 to 433 (RGDPFDKNYV…VPNTKKQKCG (160 aa)) is disordered. Composition is skewed to gly residues over residues 289-298 (SRGGGGGGGS), 325-336 (GLGGLGGGGGGG), and 344-359 (GGGGSGTRKMSSGGGG). The segment covering 360–376 (GDHDHGLSSKEKYEQHK) has biased composition (basic and acidic residues). A compositionally biased stretch (gly residues) spans 385–398 (GGSGGGGGGGGGGL). Lys410 participates in a covalent cross-link: Glycyl lysine isopeptide (Lys-Gly) (interchain with G-Cter in host SUMO1). 3 positions are modified to phosphoserine: Ser413, Ser415, and Ser418.

This sequence belongs to the herpesviridae polymerase accessory protein family. As to quaternary structure, forms homodimers. Interacts with host SMARCB1. Interacts with host NCL/nucleolin; this interaction is important for the organization of proteins within viral replication compartments. Interacts with UL112/UL113; this interaction is necessary for efficient viral DNA replication. Interacts with UL84. Interacts with the uracil DNA glycosylase UL114. Interacts with the DNA polymerase catalytic subunit UL54. Interacts with host IRF3. Interacts with host RELA. In terms of processing, phosphorylated by UL97 on serine residues, phosphorylation seems important for UL44 nuclear entry but does not directly affect its role in replication. Sumoylated. Sumoylation on Lys-410 increases viral DNA replication.

It is found in the virion. Its subcellular location is the host nucleus. Functionally, accessory subunit of the DNA polymerase that plays an essential role in viral DNA replication and acts by increasing the processivity of polymerization. Forms dimers that binds to double-stranded DNA and UL54 specifically to stimulates long chain DNA synthesis efficiently. Plays an important role in maintaining the structure of viral replication compartments by interacting with host nucleolin/NUC. In addition, suppresses innate immune responses through effects on host IRF3 and NF-kappa-B. Mechanistically, interfere with the binding of IRF3 and the p65 NF-kappa-B subunit to the promoters of antiviral genes, thereby inhibiting the expression of these genes. This chain is DNA polymerase processivity factor (UL44), found in Homo sapiens (Human).